The sequence spans 418 residues: Tyrosine--tRNA ligase (418 aa).

Tyrosine 34 is a binding site for L-tyrosine. The 'HIGH' region signature appears at proline 39 to histidine 48. Residues tyrosine 169 and glutamine 173 each coordinate L-tyrosine. The 'KMSKS' region motif lies at lysine 229–serine 233. Position 232 (lysine 232) interacts with ATP. An S4 RNA-binding domain is found at leucine 352–tyrosine 418.

Belongs to the class-I aminoacyl-tRNA synthetase family. TyrS type 1 subfamily. As to quaternary structure, homodimer.

It is found in the cytoplasm. The catalysed reaction is tRNA(Tyr) + L-tyrosine + ATP = L-tyrosyl-tRNA(Tyr) + AMP + diphosphate + H(+). Catalyzes the attachment of tyrosine to tRNA(Tyr) in a two-step reaction: tyrosine is first activated by ATP to form Tyr-AMP and then transferred to the acceptor end of tRNA(Tyr). The protein is Tyrosine--tRNA ligase of Streptococcus pyogenes serotype M12 (strain MGAS2096).